A 305-amino-acid polypeptide reads, in one-letter code: UDP-3-O-acyl-N-acetylglucosamine deacetylase (305 aa).

Zn(2+) contacts are provided by His-78, His-237, and Asp-241. The active-site Proton donor is His-264.

This sequence belongs to the LpxC family. Requires Zn(2+) as cofactor.

It catalyses the reaction a UDP-3-O-[(3R)-3-hydroxyacyl]-N-acetyl-alpha-D-glucosamine + H2O = a UDP-3-O-[(3R)-3-hydroxyacyl]-alpha-D-glucosamine + acetate. The protein operates within glycolipid biosynthesis; lipid IV(A) biosynthesis; lipid IV(A) from (3R)-3-hydroxytetradecanoyl-[acyl-carrier-protein] and UDP-N-acetyl-alpha-D-glucosamine: step 2/6. Its function is as follows. Catalyzes the hydrolysis of UDP-3-O-myristoyl-N-acetylglucosamine to form UDP-3-O-myristoylglucosamine and acetate, the committed step in lipid A biosynthesis. This chain is UDP-3-O-acyl-N-acetylglucosamine deacetylase, found in Cupriavidus pinatubonensis (strain JMP 134 / LMG 1197) (Cupriavidus necator (strain JMP 134)).